A 56-amino-acid polypeptide reads, in one-letter code: Large ribosomal subunit protein bL32 (56 aa).

Positions 1–16 are enriched in basic residues; it reads MAVQKNRKTRSKRGMR. Positions 1-28 are disordered; sequence MAVQKNRKTRSKRGMRRSHDALTTAALS.

Belongs to the bacterial ribosomal protein bL32 family.

This Vibrio campbellii (strain ATCC BAA-1116) protein is Large ribosomal subunit protein bL32.